The chain runs to 279 residues: 32 kDa beta-galactoside-binding lectin (279 aa).

2 consecutive Galectin domains span residues 13-144 (YRSV…VHWG) and 152-279 (YESG…IQIQ). 213 to 219 (WGNEERE) lines the a beta-D-galactoside pocket.

Post-translationally, the N-terminus is blocked.

Binds galactose. The sequence is that of 32 kDa beta-galactoside-binding lectin (lec-1) from Caenorhabditis elegans.